A 71-amino-acid polypeptide reads, in one-letter code: Translation initiation factor IF-1 (71 aa).

In terms of domain architecture, S1-like spans 1-71; that stretch reads MKEKNIEMQG…SKGRIIFRSR (71 aa).

The protein belongs to the IF-1 family. In terms of assembly, component of the 30S ribosomal translation pre-initiation complex which assembles on the 30S ribosome in the order IF-2 and IF-3, IF-1 and N-formylmethionyl-tRNA(fMet); mRNA recruitment can occur at any time during PIC assembly.

The protein localises to the cytoplasm. Functionally, one of the essential components for the initiation of protein synthesis. Stabilizes the binding of IF-2 and IF-3 on the 30S subunit to which N-formylmethionyl-tRNA(fMet) subsequently binds. Helps modulate mRNA selection, yielding the 30S pre-initiation complex (PIC). Upon addition of the 50S ribosomal subunit IF-1, IF-2 and IF-3 are released leaving the mature 70S translation initiation complex. This is Translation initiation factor IF-1 from Buchnera aphidicola subsp. Cinara cedri (strain Cc).